A 442-amino-acid polypeptide reads, in one-letter code: Envelope glycoprotein D (442 aa).

The signal sequence occupies residues 1-19 (MPAVLLVLYVNPPPSVCIL). Over 20-405 (TQKLSLGLYN…NSTFVGISVG (386 aa)) the chain is Virion surface. N103 and N111 each carry an N-linked (GlcNAc...) asparagine; by host glycan. Disulfide bonds link C138/C259, C176/C273, and C188/C197. Residues 331–364 (PDNHPGFDSVESEITQNKTDPKPGQADPKPNQPF) form a disordered region. N-linked (GlcNAc...) asparagine; by host glycans are attached at residues N347 and N396. A helical transmembrane segment spans residues 406 to 422 (LGIAGLVLVGVILYVCL). The Intravirion segment spans residues 423-442 (RRKKELKVCTERLDSPTLDL).

Belongs to the herpesviridae glycoprotein D family.

It localises to the virion membrane. Envelope glycoprotein that binds to host cell entry receptors, promoting the virus entry into host cells. May trigger fusion with host membrane, by recruiting the fusion machinery composed of gB and gH/gL. This Equine herpesvirus 1 (strain Kentucky A) (EHV-1) protein is Envelope glycoprotein D (gD).